The chain runs to 82 residues: Large ribosomal subunit protein eL14 (82 aa).

This sequence belongs to the eukaryotic ribosomal protein eL14 family.

The sequence is that of Large ribosomal subunit protein eL14 from Pyrococcus abyssi (strain GE5 / Orsay).